Consider the following 779-residue polypeptide: Ribosome-releasing factor 2, mitochondrial (779 aa).

Positions 68-353 (AKIRNIGIMA…AVTTYLPSPE (286 aa)) constitute a tr-type G domain. Residues 77–84 (AHIDAGKT), 141–145 (DTPGH), and 195–198 (NKMD) each bind GTP.

The protein belongs to the TRAFAC class translation factor GTPase superfamily. Classic translation factor GTPase family. EF-G/EF-2 subfamily.

The protein resides in the mitochondrion. It carries out the reaction GTP + H2O = GDP + phosphate + H(+). Mitochondrial GTPase that mediates the disassembly of ribosomes from messenger RNA at the termination of mitochondrial protein biosynthesis. Acts in collaboration with MRRF. GTP hydrolysis follows the ribosome disassembly and probably occurs on the ribosome large subunit. Not involved in the GTP-dependent ribosomal translocation step during translation elongation. This is Ribosome-releasing factor 2, mitochondrial (Gfm2) from Rattus norvegicus (Rat).